The sequence spans 131 residues: MDPHPLTWALVLLGPALALSRAPAPAQEAPEKLCGHHFVRALVRLCGGPRWSPEDGRAVAGGDRELLQWLEGQHLFHGLMASGDPMLVLAPQPPPQASGHHHHRRAAATNPARHCCLSGCTRQDLLTLCPH.

Residues 1-26 (MDPHPLTWALVLLGPALALSRAPAPA) form the signal peptide. Intrachain disulfides connect C34–C116, C46–C129, and C115–C120. A propeptide spans 58 to 103 (AVAGGDRELLQWLEGQHLFHGLMASGDPMLVLAPQPPPQASGHHHH) (c peptide like).

It belongs to the insulin family. Heterodimer of a B chain and an A chain linked by two disulfide bonds. In terms of tissue distribution, expressed exclusively in prenatal and postnatal Leydig cells.

It localises to the secreted. Seems to play a role in testicular function. May be a trophic hormone with a role in testicular descent in fetal life. Is a ligand for LGR8 receptor. The sequence is that of Insulin-like 3 (INSL3) from Sus scrofa (Pig).